The primary structure comprises 200 residues: uncharacterized protein (200 aa).

The segment at 1 to 21 (MSNSAQRDARNSRDESARASD) is disordered. The segment covering 7–21 (RDARNSRDESARASD) has biased composition (basic and acidic residues).

This is an uncharacterized protein from Mycobacterium tuberculosis (strain CDC 1551 / Oshkosh).